A 339-amino-acid polypeptide reads, in one-letter code: MNIFVEFFLVMLKVCWAIVMAGFKWLIRPKEKSVAGQVCVITGAGGGLGRLFAKEFARRRATLVLWDINSHSNEETAEMVRQIYREQDNPMSKEGAVGGVEEVPPFQPQVYTYVLDVGKRESVYSTAEKVRREVGEVDLLINNAGVVSGHHLLECPDELIERTMVVNCHAHFWTTKAFLPKMLEMNHGHIVTVASSLGLFSTAGVEDYCASKFGAIGFHESLSHEIQASEKDGIKMTLVCPYLVDTGMFRGCRIRKEIEPFLPPLRPEFCVKQAMRAILTDQPMICTPRIVYMVNFMKSILPFEAIVCMYRFLGADKCMYPFLAQRKEAMNNNEAKNGI.

Residues 3 to 23 (IFVEFFLVMLKVCWAIVMAGF) traverse the membrane as a helical; Signal-anchor segment. NADP(+) is bound at residue 40–64 (VITGAGGGLGRLFAKEFARRRATLV). Substrate is bound at residue S195. The Proton acceptor role is filled by Y208.

The protein belongs to the short-chain dehydrogenases/reductases (SDR) family.

It localises to the microsome membrane. Its subcellular location is the endoplasmic reticulum membrane. It carries out the reaction all-trans-retinol + NADP(+) = all-trans-retinal + NADPH + H(+). The protein operates within cofactor metabolism; retinol metabolism. Retinol dehydrogenase with a clear preference for NADP. Converts all-trans-retinol to all-trans-retinal. Has no detectable activity towards 11-cis-retinol, 9-cis-retinol and 13-cis-retinol. This chain is Retinol dehydrogenase 10-A (rdh10a), found in Danio rerio (Zebrafish).